The primary structure comprises 192 residues: Peptide deformylase 1 (192 aa).

Residues cysteine 101 and histidine 143 each coordinate Fe cation. Glutamate 144 is an active-site residue. Histidine 147 is a Fe cation binding site.

The protein belongs to the polypeptide deformylase family. The cofactor is Fe(2+).

The catalysed reaction is N-terminal N-formyl-L-methionyl-[peptide] + H2O = N-terminal L-methionyl-[peptide] + formate. Removes the formyl group from the N-terminal Met of newly synthesized proteins. Requires at least a dipeptide for an efficient rate of reaction. N-terminal L-methionine is a prerequisite for activity but the enzyme has broad specificity at other positions. The sequence is that of Peptide deformylase 1 from Prochlorococcus marinus (strain MIT 9313).